The chain runs to 181 residues: Transcriptional repressor NrdR (181 aa).

A zinc finger lies at 3–34 (CLFCQHTYTRVIDSRVSEDGATIRRRRECEAC). The ATP-cone domain occupies 49–139 (PVIIKKDGGR…VYRSFQDVAD (91 aa)).

This sequence belongs to the NrdR family. Zn(2+) serves as cofactor.

Its function is as follows. Negatively regulates transcription of bacterial ribonucleotide reductase nrd genes and operons by binding to NrdR-boxes. This Xylella fastidiosa (strain 9a5c) protein is Transcriptional repressor NrdR.